The chain runs to 160 residues: SsrA-binding protein (160 aa).

The protein belongs to the SmpB family.

It localises to the cytoplasm. In terms of biological role, required for rescue of stalled ribosomes mediated by trans-translation. Binds to transfer-messenger RNA (tmRNA), required for stable association of tmRNA with ribosomes. tmRNA and SmpB together mimic tRNA shape, replacing the anticodon stem-loop with SmpB. tmRNA is encoded by the ssrA gene; the 2 termini fold to resemble tRNA(Ala) and it encodes a 'tag peptide', a short internal open reading frame. During trans-translation Ala-aminoacylated tmRNA acts like a tRNA, entering the A-site of stalled ribosomes, displacing the stalled mRNA. The ribosome then switches to translate the ORF on the tmRNA; the nascent peptide is terminated with the 'tag peptide' encoded by the tmRNA and targeted for degradation. The ribosome is freed to recommence translation, which seems to be the essential function of trans-translation. The chain is SsrA-binding protein from Sodalis glossinidius (strain morsitans).